The following is a 550-amino-acid chain: Envelope glycoprotein E (550 aa).

The first 20 residues, 1–20 (MDRGAVVGFLLGVCVVSCLA), serve as a signal peptide directing secretion. The Virion surface segment spans residues 21-419 (GTPKTSWRRV…HAPPTHGALR (399 aa)). The tract at residues 63–88 (CGPLHPSWVSLMPPKQVPETVVDAAC) is interaction with gI. N-linked (GlcNAc...) asparagine; by host glycosylation is present at Asn124. Residues 162 to 214 (QPAPVPTPPPTPADYDEDDNDEGEDESLAGTPASGTPRLPPPPAPPRSWPSAP) form a disordered region. A compositionally biased stretch (pro residues) spans 164–173 (APVPTPPPTP). Over residues 175–188 (DYDEDDNDEGEDES) the composition is skewed to acidic residues. Residue Tyr176 is modified to Sulfotyrosine; by host. Over residues 199 to 209 (RLPPPPAPPRS) the composition is skewed to pro residues. Residues 235 to 380 (SPGETFSTNV…GHITISTAAQ (146 aa)) are fc-binding. N-linked (GlcNAc...) asparagine; by host glycosylation is present at Asn243. 3 disulfide bridges follow: Cys271–Cys297, Cys280–Cys289, and Cys314–Cys323. Positions 394–413 (GADLAEPTHPHVGAPPHAPP) are disordered. The segment covering 403-413 (PHVGAPPHAPP) has biased composition (low complexity). A helical transmembrane segment spans residues 420 to 440 (LGAVMGAALLLSALGLSVWAC). Residues 441–550 (MTCWRRRAWR…SQASDSSVFW (110 aa)) are Intravirion-facing. Short sequence motifs (internalization motif) lie at residues 463–466 (YIRV) and 472–475 (YADW). The interaction with VP22 and UL11 stretch occupies residues 470–495 (ELYADWSSDSEGERDQVPWLAPPERP). Ser476 and Ser477 each carry phosphoserine; by host CK2. The segment at 476–484 (SSDSEGERD) is acidic. Positions 476-550 (SSDSEGERDQ…SQASDSSVFW (75 aa)) are disordered. Ser503 carries the post-translational modification Phosphoserine. A compositionally biased stretch (polar residues) spans 541–550 (SQASDSSVFW).

This sequence belongs to the alphaherpesvirinae glycoprotein E family. Interacts with gI; this interaction enhances the Fc receptor function of gE. The heterodimer gE/gI interacts with the Fc part of host IgG. Interacts (via C-terminus) with VP22 tegument protein; this interaction is necessary for the recruitment of VP22 to the Golgi and its packaging into virions. Interacts (via C-terminus) with UL11 tegument protein. Phosphorylated on serines within the acidic cluster. Phosphorylation determines whether endocytosed viral gE traffics to the trans-Golgi network or recycles to the cell membrane. Post-translationally, N-glycosylated, and sulfated.

Its subcellular location is the virion membrane. It is found in the host cell membrane. The protein localises to the host cell junction. The protein resides in the host Golgi apparatus membrane. It localises to the host endosome membrane. Functionally, in epithelial cells, the heterodimer gE/gI is required for the cell-to-cell spread of the virus, by sorting nascent virions to cell junctions. Once the virus reaches the cell junctions, virus particles can spread to adjacent cells extremely rapidly through interactions with cellular receptors that accumulate at these junctions. Implicated in basolateral spread in polarized cells. In neuronal cells, gE/gI is essential for the anterograde spread of the infection throughout the host nervous system. Together with US9, the heterodimer gE/gI is involved in the sorting and transport of viral structural components toward axon tips. Its function is as follows. The heterodimer gE/gI serves as a receptor for the Fc part of host IgG. Dissociation of gE/gI from IgG occurs at acidic pH. May thus be involved in anti-HSV antibodies bipolar bridging, followed by intracellular endocytosis and degradation, thereby interfering with host IgG-mediated immune responses. In Human herpesvirus 1 (strain 17) (HHV-1), this protein is Envelope glycoprotein E (gE).